Reading from the N-terminus, the 143-residue chain is Endoribonuclease YbeY (143 aa).

Positions 109, 113, and 119 each coordinate Zn(2+).

This sequence belongs to the endoribonuclease YbeY family. It depends on Zn(2+) as a cofactor.

The protein localises to the cytoplasm. Its function is as follows. Single strand-specific metallo-endoribonuclease involved in late-stage 70S ribosome quality control and in maturation of the 3' terminus of the 16S rRNA. This chain is Endoribonuclease YbeY, found in Neorickettsia sennetsu (strain ATCC VR-367 / Miyayama) (Ehrlichia sennetsu).